We begin with the raw amino-acid sequence, 109 residues long: Gliadoralin-A (109 aa).

Residues 1–16 form the signal peptide; sequence MLVILLMVVVLALSSA. Residue glutamine 17 is modified to Pyrrolidone carboxylic acid. Positions 17–109 are disordered; the sequence is QDPNRDFVVS…PRYQQPRRAV (93 aa). Residues 35-109 show a composition bias toward low complexity; sequence PSSQQGTVGG…PRYQQPRRAV (75 aa). Residues 107-109 constitute a propeptide that is removed on maturation; it reads RAV.

Predominantly proteolytically processed at its C-terminus before secretion to produce the major form gliadoralin A 1-90. Further proteloytically processed after secretion to produce minor forms. Potential substrate of transglutaminase. As to expression, found in saliva (at protein level). Secreted from the submandibular gland.

The protein resides in the secreted. Its function is as follows. May play a role in the formation of the protective mucosal protein pellicle involved in the reinforcement and protection of oral mucosal epithelial surface. The sequence is that of Gliadoralin-A from Rattus norvegicus (Rat).